A 214-amino-acid chain; its full sequence is Elongation factor Ts (214 aa).

The tract at residues 80–83 (TDFV) is involved in Mg(2+) ion dislocation from EF-Tu.

Belongs to the EF-Ts family.

It is found in the cytoplasm. Associates with the EF-Tu.GDP complex and induces the exchange of GDP to GTP. It remains bound to the aminoacyl-tRNA.EF-Tu.GTP complex up to the GTP hydrolysis stage on the ribosome. The protein is Elongation factor Ts of Syntrophomonas wolfei subsp. wolfei (strain DSM 2245B / Goettingen).